The following is a 282-amino-acid chain: Snake venom serine protease BmSP (282 aa).

The signal sequence occupies residues 1 to 18; that stretch reads MVLIGVLASLLILQLSYS. Residues 19–56 constitute a propeptide that is removed on maturation; the sequence is KSLDDGAKESAYDDEIQQSSWGNSTVNTTLTETVVIQL. 2 N-linked (GlcNAc...) asparagine glycosylation sites follow: Asn-41 and Asn-45. Residues 57–280 form the Peptidase S1 domain; it reads IMGGSECYKS…YIDWIKGIIA (224 aa). 5 cysteine pairs are disulfide-bonded: Cys-63-Cys-195, Cys-82-Cys-98, Cys-174-Cys-241, Cys-206-Cys-220, and Cys-231-Cys-256. The active-site Charge relay system is His-97. The N-linked (GlcNAc...) asparagine glycan is linked to Asn-135. The Charge relay system role is filled by Asp-142. Residues Asn-149 and Asn-153 are each glycosylated (N-linked (GlcNAc...) asparagine). Ser-235 functions as the Charge relay system in the catalytic mechanism.

Belongs to the peptidase S1 family. Snake venom subfamily. In terms of assembly, monomer. In terms of tissue distribution, expressed by the venom gland.

It localises to the secreted. Snake venom serine protease that may act in the hemostasis system of the prey. The chain is Snake venom serine protease BmSP from Bungarus multicinctus (Many-banded krait).